The chain runs to 149 residues: Large ribosomal subunit protein uL13 (149 aa).

The protein belongs to the universal ribosomal protein uL13 family. Part of the 50S ribosomal subunit.

This protein is one of the early assembly proteins of the 50S ribosomal subunit, although it is not seen to bind rRNA by itself. It is important during the early stages of 50S assembly. In Borrelia hermsii (strain HS1 / DAH), this protein is Large ribosomal subunit protein uL13.